The following is a 365-amino-acid chain: 3-dehydroquinate synthase (365 aa).

NAD(+) contacts are provided by residues 95 to 99 (GVVGD), 119 to 120 (TT), Lys-132, and Lys-141. Positions 174, 238, and 255 each coordinate Zn(2+).

Belongs to the sugar phosphate cyclases superfamily. Dehydroquinate synthase family. Co(2+) serves as cofactor. Requires Zn(2+) as cofactor. NAD(+) is required as a cofactor.

The protein resides in the cytoplasm. It carries out the reaction 7-phospho-2-dehydro-3-deoxy-D-arabino-heptonate = 3-dehydroquinate + phosphate. The protein operates within metabolic intermediate biosynthesis; chorismate biosynthesis; chorismate from D-erythrose 4-phosphate and phosphoenolpyruvate: step 2/7. Functionally, catalyzes the conversion of 3-deoxy-D-arabino-heptulosonate 7-phosphate (DAHP) to dehydroquinate (DHQ). The chain is 3-dehydroquinate synthase from Chlorobium chlorochromatii (strain CaD3).